The primary structure comprises 757 residues: Serine/threonine-protein phosphatase 2A 56 kDa regulatory subunit delta isoform (757 aa).

Positions 1–11 are enriched in basic residues; it reads MMRGFKQRLIK. Disordered regions lie at residues 1–172 and 188–250; these read MMRG…EDHA and ISNA…NPDT. The segment covering 12-21 has biased composition (low complexity); it reads KTTGSSSSSS. Basic and acidic residues predominate over residues 23–34; it reads KKKDKEKEKEKS. Composition is skewed to low complexity over residues 35-66, 86-119, and 128-147; these read STTS…GSKS, SSTS…STKK, and QSKQ…SSSS. Over residues 160 to 172 the composition is skewed to basic and acidic residues; it reads TKDDKSTSGEDHA. Residues 197–216 show a composition bias toward low complexity; the sequence is SSDVENGNSNNNNMNINTSN. Over residues 217–228 the composition is skewed to polar residues; that stretch reads TQDANHASSQSI. Phosphothreonine occurs at positions 242 and 257. Positions 734 to 757 are disordered; sequence SFNTASENNTLNEENENDCDSEIQ. Residues 746 to 757 show a composition bias toward acidic residues; sequence EENENDCDSEIQ.

This sequence belongs to the phosphatase 2A regulatory subunit B family. In terms of assembly, PP2A consists of a common heterodimeric core enzyme, composed of a 36 kDa catalytic subunit (subunit C) and a 65 kDa constant regulatory subunit (PR65 or subunit A), that associates with a variety of regulatory subunits. Proteins that associate with the core dimer include three families of regulatory subunits B (the R2/B/PR55/B55, R3/B''/PR72/PR130/PR59 and R5/B'/B56 families), the 48 kDa variable regulatory subunit, viral proteins, and cell signaling molecules.

The protein resides in the cytoplasm. Its subcellular location is the nucleus. Its function is as follows. The B regulatory subunit might modulate substrate selectivity and catalytic activity, and might also direct the localization of the catalytic enzyme to a particular subcellular compartment. In terms of biological role, multicopy suppressor of ROX3 and HSP60. The protein is Serine/threonine-protein phosphatase 2A 56 kDa regulatory subunit delta isoform (RTS1) of Saccharomyces cerevisiae (strain ATCC 204508 / S288c) (Baker's yeast).